Here is a 350-residue protein sequence, read N- to C-terminus: MLEEALAAIQNARDLEELKALKARYLGKKGLLTQEMKGLSALPLEERRKRGQELNAIKAALEAALEAREKALEEAALKEALERERVDVSLPGASLFSGGLHPITLMERELVEIFRALGYQAVEGPEVESEFFNFDALNIPEHHPARDMWDTFWLAGEGFRLEGPLGEEVEGRLLLRTHTSPMQVRYMVAHTPPFRIVVPGRVFRFEQTDATHEAVFHQLEGLVVGEGITMAHLKGAIYELAQALFGPDSKVRFQPVYFPFVEPGAQFAVWWPEGGKWLELGGAGMVHPKVFQAVDAYRERLGLPSAYRGVTGFAFGLGVERLAMLRYGIPDIRYFFGGRLKFLEQFKGVL.

Mg(2+) is bound at residue Glu262.

The protein belongs to the class-II aminoacyl-tRNA synthetase family. Phe-tRNA synthetase alpha subunit type 1 subfamily. Tetramer of two alpha and two beta subunits. Mg(2+) is required as a cofactor.

It is found in the cytoplasm. The catalysed reaction is tRNA(Phe) + L-phenylalanine + ATP = L-phenylalanyl-tRNA(Phe) + AMP + diphosphate + H(+). This chain is Phenylalanine--tRNA ligase alpha subunit, found in Thermus thermophilus (strain ATCC BAA-163 / DSM 7039 / HB27).